We begin with the raw amino-acid sequence, 150 residues long: Phosphoribosyl-AMP cyclohydrolase (150 aa).

Residue Asp93 coordinates Mg(2+). Cys94 lines the Zn(2+) pocket. The Mg(2+) site is built by Asp95 and Asp97. Cys112 and Cys119 together coordinate Zn(2+).

Belongs to the PRA-CH family. In terms of assembly, homodimer. Mg(2+) serves as cofactor. Zn(2+) is required as a cofactor.

Its subcellular location is the cytoplasm. It catalyses the reaction 1-(5-phospho-beta-D-ribosyl)-5'-AMP + H2O = 1-(5-phospho-beta-D-ribosyl)-5-[(5-phospho-beta-D-ribosylamino)methylideneamino]imidazole-4-carboxamide. It participates in amino-acid biosynthesis; L-histidine biosynthesis; L-histidine from 5-phospho-alpha-D-ribose 1-diphosphate: step 3/9. In terms of biological role, catalyzes the hydrolysis of the adenine ring of phosphoribosyl-AMP. In Rhizobium leguminosarum bv. trifolii (strain WSM2304), this protein is Phosphoribosyl-AMP cyclohydrolase.